Here is a 154-residue protein sequence, read N- to C-terminus: MYRMQLLSCIALSLALVTNSAPTSSSTKKTQLQLEHLLLDLQMILNGINNYKNPKLTRMLTFKFYMPKKATELRHLQCLEEELKPLEEVLNLAQSKSFHLRDTKDLISNINVIVLELKGSETTLMCEYADETATIVEFLNRWITFCQSIISTLT.

A signal peptide spans Met-1–Ser-20. Thr-23 carries an O-linked (GalNAc...) threonine glycan. Cys-78 and Cys-126 are oxidised to a cystine.

It belongs to the IL-2 family.

The protein resides in the secreted. Cytokine produced by activated CD4-positive helper T-cells and to a lesser extend activated CD8-positive T-cells and natural killer (NK) cells that plays pivotal roles in the immune response and tolerance. Binds to a receptor complex composed of either the high-affinity trimeric IL-2R (IL2RA/CD25, IL2RB/CD122 and IL2RG/CD132) or the low-affinity dimeric IL-2R (IL2RB and IL2RG). Interaction with the receptor leads to oligomerization and conformation changes in the IL-2R subunits resulting in downstream signaling starting with phosphorylation of JAK1 and JAK3. In turn, JAK1 and JAK3 phosphorylate the receptor to form a docking site leading to the phosphorylation of several substrates including STAT5. This process leads to activation of several pathways including STAT, phosphoinositide-3-kinase/PI3K and mitogen-activated protein kinase/MAPK pathways. Functions as a T-cell growth factor and can increase NK-cell cytolytic activity as well. Promotes strong proliferation of activated B-cells and subsequently immunoglobulin production. Plays a pivotal role in regulating the adaptive immune system by controlling the survival and proliferation of regulatory T-cells, which are required for the maintenance of immune tolerance. Moreover, participates in the differentiation and homeostasis of effector T-cell subsets, including Th1, Th2, Th17 as well as memory CD8-positive T-cells. This chain is Interleukin-2 (IL2), found in Macaca fascicularis (Crab-eating macaque).